A 622-amino-acid chain; its full sequence is Polygalacturonase 1 beta-like protein 1 (622 aa).

The N-terminal stretch at 1–21 is a signal peptide; it reads MRKQFVFLLPFLSRLYHVVIA. The stretch at 118–121 is one FXXY 1 repeat; sequence FSVY. Asparagine 125 carries an N-linked (GlcNAc...) asparagine glycan. FXXY repeat units lie at residues 126–129, 140–143, 154–157, 168–171, 182–185, 196–199, 210–213, 224–227, 239–242, 253–256, and 267–270; these read FTNY, FKKY, FRRY, FTGY, FNSY, FKNY, FKAY, FKTY, FTSY, FSSY, and FSNY. The N-linked (GlcNAc...) asparagine glycan is linked to asparagine 278. 7 FXXY repeats span residues 281 to 284, 295 to 298, 309 to 312, 323 to 326, 337 to 340, 351 to 354, and 365 to 368; these read FKGY, FKSY, FLNY, FSSY, FVNY, FSGY, and FKTY. Asparagine 371 carries N-linked (GlcNAc...) asparagine glycosylation. FXXY repeat units follow at residues 374–377 and 384–387; these read FKDY and FAKY. N-linked (GlcNAc...) asparagine glycans are attached at residues asparagine 388 and asparagine 461. The region spanning 407–621 is the BURP domain; it reads FFRESMLKEG…FENDMNWAIA (215 aa).

Expressed in flowers and stems.

The protein resides in the secreted. Its subcellular location is the extracellular space. It is found in the apoplast. The protein localises to the cell wall. Involved in cell size determination. The protein is Polygalacturonase 1 beta-like protein 1 of Arabidopsis thaliana (Mouse-ear cress).